The sequence spans 123 residues: UPF0102 protein APP7_1414 (123 aa).

This sequence belongs to the UPF0102 family.

This is UPF0102 protein APP7_1414 from Actinobacillus pleuropneumoniae serotype 7 (strain AP76).